We begin with the raw amino-acid sequence, 180 residues long: ATP synthase subunit delta (180 aa).

The protein belongs to the ATPase delta chain family. In terms of assembly, F-type ATPases have 2 components, F(1) - the catalytic core - and F(0) - the membrane proton channel. F(1) has five subunits: alpha(3), beta(3), gamma(1), delta(1), epsilon(1). F(0) has three main subunits: a(1), b(2) and c(10-14). The alpha and beta chains form an alternating ring which encloses part of the gamma chain. F(1) is attached to F(0) by a central stalk formed by the gamma and epsilon chains, while a peripheral stalk is formed by the delta and b chains.

The protein resides in the cell inner membrane. Functionally, f(1)F(0) ATP synthase produces ATP from ADP in the presence of a proton or sodium gradient. F-type ATPases consist of two structural domains, F(1) containing the extramembraneous catalytic core and F(0) containing the membrane proton channel, linked together by a central stalk and a peripheral stalk. During catalysis, ATP synthesis in the catalytic domain of F(1) is coupled via a rotary mechanism of the central stalk subunits to proton translocation. In terms of biological role, this protein is part of the stalk that links CF(0) to CF(1). It either transmits conformational changes from CF(0) to CF(1) or is implicated in proton conduction. The sequence is that of ATP synthase subunit delta from Citrifermentans bemidjiense (strain ATCC BAA-1014 / DSM 16622 / JCM 12645 / Bem) (Geobacter bemidjiensis).